A 275-amino-acid chain; its full sequence is Homeobox-leucine zipper protein ATHB-17 (275 aa).

A disordered region spans residues Ser-95–Leu-143. The homeobox DNA-binding region spans Pro-136 to Gln-195. The interval Leu-203–Leu-224 is leucine-zipper. Residues Ala-252–Arg-275 form a disordered region.

It belongs to the HD-ZIP homeobox family. Class II subfamily.

It localises to the nucleus. Functionally, probable transcription factor. In Arabidopsis thaliana (Mouse-ear cress), this protein is Homeobox-leucine zipper protein ATHB-17 (ATHB-17).